Consider the following 179-residue polypeptide: Large ribosomal subunit protein bL9 (179 aa).

This sequence belongs to the bacterial ribosomal protein bL9 family.

Functionally, binds to the 23S rRNA. The polypeptide is Large ribosomal subunit protein bL9 (Bartonella bacilliformis (strain ATCC 35685 / KC583 / Herrer 020/F12,63)).